We begin with the raw amino-acid sequence, 1198 residues long: Structural polyprotein (1198 aa).

Positions 2–15 are interaction with host EXOC1; sequence TKKPGGPGKNRAIN. Residues 37–72 are hydrophobic; homodimerization of capsid protein C; sequence LLDGRGPVRFVLALITFFKFTALAPTKALLGRWKAV. A propeptide spans 106–127 (ER anchor for the capsid protein C, removed in mature form by serine protease NS3); sequence GGNEGSIMWLASLAVVIACAGA. A helical transmembrane segment spans residues 110-130; the sequence is GSIMWLASLAVVIACAGAMKL. N-linked (GlcNAc...) asparagine; by host glycosylation is present at N142. Transmembrane regions (helical) follow at residues 254–274 and 280–294; these read WIIR…MLGS and VVFT…PAYS. Disulfide bonds link C297-C324, C354-C410, C354-C415, C368-C399, C386-C410, and C386-C415. A fusion peptide region spans residues 392 to 405; sequence DRGWGNGCGLFGKG. N-linked (GlcNAc...) asparagine; by host glycosylation occurs at N448. 2 cysteine pairs are disulfide-bonded: C484/C581 and C598/C629. Helical transmembrane passes span 747–767 and 774–794; these read FGGM…WMGV and IALA…NVHA. 6 disulfide bridges follow: C798–C809, C849–C937, C973–C1017, C1074–C1123, C1085–C1106, and C1107–C1110. N-linked (GlcNAc...) asparagine; by host glycosylation is found at N924 and N1001. The segment at 1151–1177 is disordered; sequence MVDPFSAGPSGDVSGHPGSPSQEVDGQ.

Homodimer. Interacts (via N-terminus) with host EXOC1 (via C-terminus); this interaction results in EXOC1 degradation through the proteasome degradation pathway. Interacts with host CAPRIN1; this interaction is involved in the suppression of the integrated stress response. As to quaternary structure, forms heterodimers with envelope protein E in the endoplasmic reticulum and Golgi. In terms of assembly, homodimer; in the endoplasmic reticulum and Golgi. Interacts with protein prM. Interacts with non-structural protein 1. Post-translationally, genome polyprotein: Specific enzymatic cleavages in vivo yield mature proteins. Cleavages in the lumen of endoplasmic reticulum are performed by host signal peptidase, whereas cleavages in the cytoplasmic side are performed by serine protease NS3. Signal cleavage at the 2K-4B site requires a prior NS3 protease-mediated cleavage at the 4A-2K site. In terms of processing, cleaved in post-Golgi vesicles by a host furin, releasing the mature small envelope protein M, and peptide pr. This cleavage is incomplete as up to 30% of viral particles still carry uncleaved prM. N-glycosylated.

The protein resides in the secreted. It localises to the virion membrane. It is found in the host endoplasmic reticulum membrane. In terms of biological role, plays a role in virus budding by binding to the cell membrane and gathering the viral RNA into a nucleocapsid that forms the core of a mature virus particle. During virus entry, may induce genome penetration into the host cytoplasm after hemifusion induced by the surface proteins. Can migrate to the cell nucleus where it modulates host functions. Overcomes the anti-viral effects of host EXOC1 by sequestering and degrading the latter through the proteasome degradation pathway. Inhibits the integrated stress response (ISR) in the infected cell by binding to host CAPRIN1. Its function is as follows. Inhibits RNA silencing by interfering with host Dicer. Functionally, prevents premature fusion activity of envelope proteins in trans-Golgi by binding to envelope protein E at pH6.0. After virion release in extracellular space, gets dissociated from E dimers. Acts as a chaperone for envelope protein E during intracellular virion assembly by masking and inactivating envelope protein E fusion peptide. prM is the only viral peptide matured by host furin in the trans-Golgi network probably to avoid catastrophic activation of the viral fusion activity in acidic Golgi compartment prior to virion release. prM-E cleavage is inefficient, and many virions are only partially matured. These uncleaved prM would play a role in immune evasion. In terms of biological role, may play a role in virus budding. Exerts cytotoxic effects by activating a mitochondrial apoptotic pathway through M ectodomain. May display a viroporin activity. Its function is as follows. Binds to host cell surface receptor and mediates fusion between viral and cellular membranes. Envelope protein is synthesized in the endoplasmic reticulum in the form of heterodimer with protein prM. They play a role in virion budding in the ER, and the newly formed immature particle is covered with 60 spikes composed of heterodimer between precursor prM and envelope protein E. The virion is transported to the Golgi apparatus where the low pH causes dissociation of PrM-E heterodimers and formation of E homodimers. prM-E cleavage is inefficient, and many virions are only partially matured. These uncleaved prM would play a role in immune evasion. Functionally, may play a role in neuroinvasiveness. The polypeptide is Structural polyprotein (Ardeidae (herons)).